The sequence spans 662 residues: UvrABC system protein B (662 aa).

In terms of domain architecture, Helicase ATP-binding spans 31–188; it reads DNIEGGEKAQ…NDLVDIQFER (158 aa). 44-51 is an ATP binding site; sequence GATGTGKT. The Beta-hairpin signature appears at 97 to 120; the sequence is YYDYYQPEAYVPSSDTYIEKDSSV. In terms of domain architecture, Helicase C-terminal spans 435–601; sequence QIDDLLGEIN…TIKKEIRDLI (167 aa). The UVR domain maps to 626 to 661; sequence KDMIKKLEGQMQEAAGLLDFELAAQIRDMILEIKAM.

It belongs to the UvrB family. In terms of assembly, forms a heterotetramer with UvrA during the search for lesions. Interacts with UvrC in an incision complex.

Its subcellular location is the cytoplasm. In terms of biological role, the UvrABC repair system catalyzes the recognition and processing of DNA lesions. A damage recognition complex composed of 2 UvrA and 2 UvrB subunits scans DNA for abnormalities. Upon binding of the UvrA(2)B(2) complex to a putative damaged site, the DNA wraps around one UvrB monomer. DNA wrap is dependent on ATP binding by UvrB and probably causes local melting of the DNA helix, facilitating insertion of UvrB beta-hairpin between the DNA strands. Then UvrB probes one DNA strand for the presence of a lesion. If a lesion is found the UvrA subunits dissociate and the UvrB-DNA preincision complex is formed. This complex is subsequently bound by UvrC and the second UvrB is released. If no lesion is found, the DNA wraps around the other UvrB subunit that will check the other stand for damage. The polypeptide is UvrABC system protein B (Streptococcus sanguinis (strain SK36)).